The following is a 501-amino-acid chain: Putative BTB/POZ domain-containing protein L107 (501 aa).

The region spanning 16–87 (TDLELTLVDS…FYITDIERSQ (72 aa)) is the BTB domain.

The protein belongs to the mimivirus BTB/WD family.

The protein is Putative BTB/POZ domain-containing protein L107 of Acanthamoeba polyphaga mimivirus (APMV).